Reading from the N-terminus, the 238-residue chain is Purine nucleoside phosphorylase DeoD-type (238 aa).

His-4 serves as a coordination point for a purine D-ribonucleoside. Phosphate contacts are provided by residues Gly-20, Arg-24, Arg-43, and 87-90 (RVGT). Residues 179–181 (EME) and 203–204 (SN) contribute to the a purine D-ribonucleoside site.

This sequence belongs to the PNP/UDP phosphorylase family. As to quaternary structure, homohexamer; trimer of homodimers.

It catalyses the reaction a purine D-ribonucleoside + phosphate = a purine nucleobase + alpha-D-ribose 1-phosphate. The enzyme catalyses a purine 2'-deoxy-D-ribonucleoside + phosphate = a purine nucleobase + 2-deoxy-alpha-D-ribose 1-phosphate. Its function is as follows. Catalyzes the reversible phosphorolytic breakdown of the N-glycosidic bond in the beta-(deoxy)ribonucleoside molecules, with the formation of the corresponding free purine bases and pentose-1-phosphate. The protein is Purine nucleoside phosphorylase DeoD-type of Lacticaseibacillus casei (strain BL23) (Lactobacillus casei).